The sequence spans 184 residues: Protein GrpE (184 aa).

Residues 1–10 (MTDTPPENEE) show a composition bias toward acidic residues. Residues 1 to 22 (MTDTPPENEEQHESNVQNENEV) form a disordered region.

Belongs to the GrpE family. In terms of assembly, homodimer.

It is found in the cytoplasm. In terms of biological role, participates actively in the response to hyperosmotic and heat shock by preventing the aggregation of stress-denatured proteins, in association with DnaK and GrpE. It is the nucleotide exchange factor for DnaK and may function as a thermosensor. Unfolded proteins bind initially to DnaJ; upon interaction with the DnaJ-bound protein, DnaK hydrolyzes its bound ATP, resulting in the formation of a stable complex. GrpE releases ADP from DnaK; ATP binding to DnaK triggers the release of the substrate protein, thus completing the reaction cycle. Several rounds of ATP-dependent interactions between DnaJ, DnaK and GrpE are required for fully efficient folding. This chain is Protein GrpE, found in Chlamydia pneumoniae (Chlamydophila pneumoniae).